We begin with the raw amino-acid sequence, 268 residues long: Putative pyruvate, phosphate dikinase regulatory protein (268 aa).

Position 147–154 (147–154 (GLSRTSKT)) interacts with ADP.

Belongs to the pyruvate, phosphate/water dikinase regulatory protein family. PDRP subfamily.

The enzyme catalyses N(tele)-phospho-L-histidyl/L-threonyl-[pyruvate, phosphate dikinase] + ADP = N(tele)-phospho-L-histidyl/O-phospho-L-threonyl-[pyruvate, phosphate dikinase] + AMP + H(+). It catalyses the reaction N(tele)-phospho-L-histidyl/O-phospho-L-threonyl-[pyruvate, phosphate dikinase] + phosphate + H(+) = N(tele)-phospho-L-histidyl/L-threonyl-[pyruvate, phosphate dikinase] + diphosphate. In terms of biological role, bifunctional serine/threonine kinase and phosphorylase involved in the regulation of the pyruvate, phosphate dikinase (PPDK) by catalyzing its phosphorylation/dephosphorylation. This is Putative pyruvate, phosphate dikinase regulatory protein from Clostridium beijerinckii (strain ATCC 51743 / NCIMB 8052) (Clostridium acetobutylicum).